Reading from the N-terminus, the 158-residue chain is Cyclic pyranopterin monophosphate synthase (158 aa).

Substrate-binding positions include 74–76 (MCH) and 112–113 (ME). The active site involves Asp127.

It belongs to the MoaC family. As to quaternary structure, homohexamer; trimer of dimers.

It carries out the reaction (8S)-3',8-cyclo-7,8-dihydroguanosine 5'-triphosphate = cyclic pyranopterin phosphate + diphosphate. It functions in the pathway cofactor biosynthesis; molybdopterin biosynthesis. Functionally, catalyzes the conversion of (8S)-3',8-cyclo-7,8-dihydroguanosine 5'-triphosphate to cyclic pyranopterin monophosphate (cPMP). The polypeptide is Cyclic pyranopterin monophosphate synthase (Helicobacter pylori (strain HPAG1)).